Here is a 121-residue protein sequence, read N- to C-terminus: Large ribosomal subunit protein uL18 (121 aa).

This sequence belongs to the universal ribosomal protein uL18 family. In terms of assembly, part of the 50S ribosomal subunit; part of the 5S rRNA/L5/L18/L25 subcomplex. Contacts the 5S and 23S rRNAs.

Its function is as follows. This is one of the proteins that bind and probably mediate the attachment of the 5S RNA into the large ribosomal subunit, where it forms part of the central protuberance. The protein is Large ribosomal subunit protein uL18 of Paraburkholderia phymatum (strain DSM 17167 / CIP 108236 / LMG 21445 / STM815) (Burkholderia phymatum).